The following is an 88-amino-acid chain: UPF0298 protein BA_4142/GBAA_4142/BAS3844 (88 aa).

It belongs to the UPF0298 family.

Its subcellular location is the cytoplasm. The protein is UPF0298 protein BA_4142/GBAA_4142/BAS3844 of Bacillus anthracis.